The primary structure comprises 247 residues: Cell division protein ZapD (247 aa).

It belongs to the ZapD family. As to quaternary structure, interacts with FtsZ.

The protein resides in the cytoplasm. Functionally, cell division factor that enhances FtsZ-ring assembly. Directly interacts with FtsZ and promotes bundling of FtsZ protofilaments, with a reduction in FtsZ GTPase activity. The protein is Cell division protein ZapD of Escherichia coli O7:K1 (strain IAI39 / ExPEC).